Here is an 85-residue protein sequence, read N- to C-terminus: Toxin BmKAEP (85 aa).

A signal peptide spans 1-21; it reads MKLFLLLVISASMLIDGLVNA. The LCN-type CS-alpha/beta domain occupies 22-82; that stretch reads DGYIRGSNGC…TWKSESNTCG (61 aa). Intrachain disulfides connect Cys-31/Cys-81, Cys-35/Cys-56, Cys-42/Cys-63, and Cys-46/Cys-65. Position 82 is a glycine amide (Gly-82).

Expressed by the venom gland.

The protein localises to the secreted. Functionally, shows anti-epileptic activity. Shares high homology with depressant insect toxins, but shows very weak toxicity against mammals and insects and no obvious symptoms on insect larvae. May target voltage-gated sodium channel (Nav). This chain is Toxin BmKAEP, found in Olivierus martensii (Manchurian scorpion).